Consider the following 885-residue polypeptide: Cadherin-1 (885 aa).

Positions 1 to 26 are cleaved as a signal peptide; that stretch reads MGPRYGGAPALLLPLLLLLQVSSGLC. Residues 27 to 156 constitute a propeptide that is removed on maturation; that stretch reads QEPEPCRPGF…SQHGLRRQKR (130 aa). Residues 121 to 131 show a composition bias toward basic residues; the sequence is KAATHHHHHHH. The interval 121-141 is disordered; sequence KAATHHHHHHHDAPSKTQTEV. Topologically, residues 157-712 are extracellular; that stretch reads DWVIPPISCP…YAEAGLQVPA (556 aa). 5 Cadherin domains span residues 158 to 264, 265 to 377, 378 to 488, 489 to 597, and 607 to 688; these read WVIP…KPEF, TQAV…PPIF, NPTT…APIF, IPCP…GPIP, and KNPQ…VFVC. Ca(2+) is bound at residue aspartate 259. A glycan (O-linked (Man...) serine) is linked at serine 282. Residue threonine 287 is glycosylated (O-linked (Man...) threonine). Aspartate 290 lines the Ca(2+) pocket. O-linked (Man...) threonine glycans are attached at residues threonine 360, threonine 472, threonine 474, and threonine 511. N-linked (GlcNAc...) asparagine glycosylation is present at asparagine 560. Residues threonine 578, threonine 580, and threonine 582 are each glycosylated (O-linked (Man...) threonine). Asparagine 639 carries an N-linked (GlcNAc...) asparagine glycan. A helical membrane pass occupies residues 713-733; that stretch reads ILGILGGILALLILILLLLLF. At 734–885 the chain is on the cytoplasmic side; that stretch reads VRRRRVVKEP…ADMYGGGEDD (152 aa). The interval 750 to 770 is disordered; sequence DTRDNVYYYDEEGGGEEDQDF. Residues tyrosine 756, tyrosine 757, and tyrosine 758 each carry the phosphotyrosine; by SRC modification. Residues 758-770 show a composition bias toward acidic residues; the sequence is YDEEGGGEEDQDF. Residues 761–772 form a required for binding CTNND1 and PSEN1 region; sequence EGGGEEDQDFDL. 5 positions are modified to phosphoserine: serine 773, serine 796, serine 841, serine 843, and serine 849. The segment at 792-811 is disordered; it reads PTLLSVPQYRPRPANPDEIG. The interval 814 to 885 is required for binding alpha, beta and gamma catenins; it reads IDENLKAADT…ADMYGGGEDD (72 aa).

Homodimer; disulfide-linked. Component of an E-cadherin/ catenin adhesion complex composed of at least E-cadherin/CDH1, beta-catenin/CTNNB1 or gamma-catenin/JUP, and potentially alpha-catenin/CTNNA1; the complex is located to adherens junctions. Found in a complex composed of CDH1, RAP1A and PKP3; PKP3 acts as a scaffold protein within the complex, the complex is required for CDH1 localization to mature desmosome cell junctions. Interacts with the TRPV4 and CTNNB1 complex. Interacts with CTNND1. The stable association of CTNNA1 is controversial as CTNNA1 was shown not to bind to F-actin when assembled in the complex. Alternatively, the CTNNA1-containing complex may be linked to F-actin by other proteins such as LIMA1. Interaction with PSEN1, cleaves CDH1 resulting in the disassociation of cadherin-based adherens junctions (CAJs). Interacts with AJAP1 and DLGAP5. Interacts with TBC1D2. Interacts with LIMA1. Interacts with CAV1. Interacts with PIP5K1C. Interacts with RAB8B. Interacts with DDR1; this stabilizes CDH1 at the cell surface and inhibits its internalization. Interacts with RAPGEF2. Interacts with KLRG1. Forms a ternary complex composed of ADAM10, CADH1 and EPHA4; within the complex, CADH1 is cleaved by ADAM10 which disrupts adherens junctions. Interacts with SPEF1. Interacts with CTNNB1 and PKP2. Interacts with AMOTL2; the interaction may facilitate binding of radial actin fibers to cell junction complexes. Interacts with DSG3; the interaction is required for CDH1 localization to developing adherens junctions. During apoptosis or with calcium influx, cleaved by a membrane-bound metalloproteinase (ADAM10), PS1/gamma-secretase and caspase-3. Processing by the metalloproteinase, induced by calcium influx, causes disruption of cell-cell adhesion and the subsequent release of beta-catenin into the cytoplasm. The residual membrane-tethered cleavage product is rapidly degraded via an intracellular proteolytic pathway. Cleavage by caspase-3 releases the cytoplasmic tail resulting in disintegration of the actin microfilament system. The gamma-secretase-mediated cleavage promotes disassembly of adherens junctions. During development of the cochlear organ of Corti, cleavage by ADAM10 at adherens junctions promotes pillar cell separation. Post-translationally, N-glycosylation at Asn-639 is essential for expression, folding and trafficking. Addition of bisecting N-acetylglucosamine by MGAT3 modulates its cell membrane location. In terms of processing, ubiquitinated by a SCF complex containing SKP2, which requires prior phosphorylation by CK1/CSNK1A1. Ubiquitinated by CBLL1/HAKAI, requires prior phosphorylation at Tyr-757. O-glycosylated. O-manosylated by TMTC1, TMTC2, TMTC3 or TMTC4. Thr-287 and Thr-511 are O-mannosylated by TMTC2 or TMTC4 but not TMTC1 or TMTC3.

Its subcellular location is the cell junction. The protein localises to the adherens junction. The protein resides in the cell membrane. It is found in the endosome. It localises to the golgi apparatus. Its subcellular location is the trans-Golgi network. The protein localises to the cytoplasm. The protein resides in the desmosome. In terms of biological role, cadherins are calcium-dependent cell adhesion proteins. They preferentially interact with themselves in a homophilic manner in connecting cells; cadherins may thus contribute to the sorting of heterogeneous cell types. CDH1 is involved in mechanisms regulating cell-cell adhesions, mobility and proliferation of epithelial cells. Promotes organization of radial actin fiber structure and cellular response to contractile forces, via its interaction with AMOTL2 which facilitates anchoring of radial actin fibers to CDH1 junction complexes at the cell membrane. Plays a role in the early stages of desmosome cell-cell junction formation via facilitating the recruitment of DSG2 and DSP to desmosome plaques. Has a potent invasive suppressor role. It is a ligand for integrin alpha-E/beta-7. Its function is as follows. E-Cad/CTF2 promotes non-amyloidogenic degradation of Abeta precursors. Has a strong inhibitory effect on APP C99 and C83 production. The polypeptide is Cadherin-1 (CDH1) (Canis lupus familiaris (Dog)).